The chain runs to 359 residues: Acyl-CoA desaturase (359 aa).

Residues 1–72 (MPAHLLQEEI…EGPKPKLEYV (72 aa)) lie on the Cytoplasmic side of the membrane. Residues 73–93 (WRNIILMGLLHLGALYGITLI) traverse the membrane as a helical segment. Position 75 (N75) interacts with substrate. Residues 94–97 (PTCK) lie on the Lumenal side of the membrane. The helical transmembrane segment at 98–118 (IYTFLWVLFYYVISALGITAG) threads the bilayer. The Cytoplasmic portion of the chain corresponds to 119-217 (VHRLWSHRTY…EKLVMFQRRY (99 aa)). The Fe cation site is built by H120 and H125. Positions 120–125 (HRLWSH) match the Histidine box-1 motif. Substrate is bound by residues N148, R155, and D156. Residues H157, H160, and H161 each contribute to the Fe cation site. The Histidine box-2 signature appears at 157 to 161 (HRAHH). Substrate is bound by residues R188 and K189. Phosphoserine is present on S203. Residues 218 to 237 (YKPGVLLLCFILPTLVPWYL) form a helical membrane-spanning segment. Residues 238–241 (WGES) lie on the Lumenal side of the membrane. The helical transmembrane segment at 242 to 263 (FQNSLFFATFLRYAVVLNATWL) threads the bilayer. Residue W262 coordinates substrate. Topologically, residues 264–359 (VNSAAHMYGY…RTGEESYKSG (96 aa)) are cytoplasmic. Residues H269, H298, H301, and H302 each contribute to the Fe cation site. The short motif at 298 to 302 (HNYHH) is the Histidine box-3 element.

It belongs to the fatty acid desaturase type 1 family. Fe(2+) serves as cofactor.

It is found in the endoplasmic reticulum membrane. The enzyme catalyses octadecanoyl-CoA + 2 Fe(II)-[cytochrome b5] + O2 + 2 H(+) = (9Z)-octadecenoyl-CoA + 2 Fe(III)-[cytochrome b5] + 2 H2O. Its function is as follows. Stearoyl-CoA desaturase that utilizes O(2) and electrons from reduced cytochrome b5 to introduce the first double bond into saturated fatty acyl-CoA substrates. Catalyzes the insertion of a cis double bond at the delta-9 position into fatty acyl-CoA substrates including palmitoyl-CoA and stearoyl-CoA. Gives rise to a mixture of 16:1 and 18:1 unsaturated fatty acids. Plays an important role in lipid biosynthesis. Plays an important role in regulating the expression of genes that are involved in lipogenesis and in regulating mitochondrial fatty acid oxidation. Plays an important role in body energy homeostasis. Contributes to the biosynthesis of membrane phospholipids, cholesterol esters and triglycerides. This is Acyl-CoA desaturase (SCD) from Ovis aries (Sheep).